The primary structure comprises 985 residues: Alanine--tRNA ligase, mitochondrial (985 aa).

The N-terminal 23 residues, 1 to 23 (MAASVAAAAGRLRRAIGRSCPWQ), are a transit peptide targeting the mitochondrion. ATP is bound by residues R105, H123, W205, and 235–237 (LWN). Positions 237 and 260 each coordinate L-alanine. G264 serves as a coordination point for ATP. Residues H632, H636, C749, and H753 each coordinate Zn(2+).

It belongs to the class-II aminoacyl-tRNA synthetase family. Monomer. Zn(2+) serves as cofactor.

It is found in the mitochondrion. It catalyses the reaction tRNA(Ala) + L-alanine + ATP = L-alanyl-tRNA(Ala) + AMP + diphosphate. It carries out the reaction (S)-lactate + ATP + H(+) = (S)-lactoyl-AMP + diphosphate. The catalysed reaction is (S)-lactoyl-AMP + L-lysyl-[protein] = N(6)-[(S)-lactoyl]-L-lysyl-[protein] + AMP + 2 H(+). Functionally, catalyzes the attachment of alanine to tRNA(Ala) in a two-step reaction: alanine is first activated by ATP to form Ala-AMP and then transferred to the acceptor end of tRNA(Ala). Also edits incorrectly charged tRNA(Ala) via its editing domain. In presence of high levels of lactate, also acts as a protein lactyltransferase that mediates lactylation of lysine residues in target proteins, such as CGAS. Acts as an inhibitor of cGAS/STING signaling by catalyzing lactylation of CGAS, preventing the formation of liquid-like droplets in which CGAS is activated. The protein is Alanine--tRNA ligase, mitochondrial (Aars2) of Rattus norvegicus (Rat).